The chain runs to 623 residues: Glutathione import ATP-binding protein GsiA (623 aa).

ABC transporter domains are found at residues 15-269 (VENL…RALL) and 314-564 (LRVR…RKLL). Residues 49-56 (GESGSGKS) and 357-364 (GESGSGKS) each bind ATP.

This sequence belongs to the ABC transporter superfamily. Glutathione importer (TC 3.A.1.5.11) family. The complex is composed of two ATP-binding proteins (GsiA), two transmembrane proteins (GsiC and GsiD) and a solute-binding protein (GsiB).

The protein resides in the cell inner membrane. It catalyses the reaction glutathione(out) + ATP + H2O = glutathione(in) + ADP + phosphate + H(+). Its function is as follows. Part of the ABC transporter complex GsiABCD involved in glutathione import. Responsible for energy coupling to the transport system. The polypeptide is Glutathione import ATP-binding protein GsiA (Escherichia coli O6:H1 (strain CFT073 / ATCC 700928 / UPEC)).